Consider the following 432-residue polypeptide: Gamma-glutamyl phosphate reductase (432 aa).

Belongs to the gamma-glutamyl phosphate reductase family.

It is found in the cytoplasm. It carries out the reaction L-glutamate 5-semialdehyde + phosphate + NADP(+) = L-glutamyl 5-phosphate + NADPH + H(+). It functions in the pathway amino-acid biosynthesis; L-proline biosynthesis; L-glutamate 5-semialdehyde from L-glutamate: step 2/2. Catalyzes the NADPH-dependent reduction of L-glutamate 5-phosphate into L-glutamate 5-semialdehyde and phosphate. The product spontaneously undergoes cyclization to form 1-pyrroline-5-carboxylate. In Psychrobacter sp. (strain PRwf-1), this protein is Gamma-glutamyl phosphate reductase.